Here is a 941-residue protein sequence, read N- to C-terminus: Isoleucine--tRNA ligase (941 aa).

The 'HIGH' region motif lies at 58–68 (PYANGDIHIGH). E563 provides a ligand contact to L-isoleucyl-5'-AMP. The 'KMSKS' region motif lies at 604–608 (KMSKS). K607 contacts ATP. 4 residues coordinate Zn(2+): C904, C907, C924, and C927.

It belongs to the class-I aminoacyl-tRNA synthetase family. IleS type 1 subfamily. In terms of assembly, monomer. Zn(2+) serves as cofactor.

It localises to the cytoplasm. The enzyme catalyses tRNA(Ile) + L-isoleucine + ATP = L-isoleucyl-tRNA(Ile) + AMP + diphosphate. Its function is as follows. Catalyzes the attachment of isoleucine to tRNA(Ile). As IleRS can inadvertently accommodate and process structurally similar amino acids such as valine, to avoid such errors it has two additional distinct tRNA(Ile)-dependent editing activities. One activity is designated as 'pretransfer' editing and involves the hydrolysis of activated Val-AMP. The other activity is designated 'posttransfer' editing and involves deacylation of mischarged Val-tRNA(Ile). The sequence is that of Isoleucine--tRNA ligase from Halorhodospira halophila (strain DSM 244 / SL1) (Ectothiorhodospira halophila (strain DSM 244 / SL1)).